The chain runs to 277 residues: Probable ketoamine kinase HMPREF0351_12196 (277 aa).

Residue 84–86 (EWI) coordinates ATP. Asp-186 (proton acceptor) is an active-site residue.

It belongs to the fructosamine kinase family.

It carries out the reaction N(6)-(D-ribulosyl)-L-lysine + ATP = N(6)-(3-O-phospho-D-ribulosyl)-L-lysine + ADP + H(+). It catalyses the reaction N-(D-ribulosyl)-cadaverine + ATP = N-(3-O-phospho-D-ribulosyl)-cadaverine + ADP + H(+). The catalysed reaction is N(6)-(D-erythrulosyl)-L-lysine + ATP = N(6)-(3-O-phospho-D-erythrulosyl)-L-lysine + ADP + H(+). The enzyme catalyses N-(D-erythrulosyl)-cadaverine + ATP = N-(3-O-phospho-D-erythrulosyl)-cadaverine + ADP + H(+). It carries out the reaction N(6)-D-ribulosyl-L-lysyl-[protein] + ATP = N(6)-(3-O-phospho-D-ribulosyl)-L-lysyl-[protein] + ADP + H(+). It catalyses the reaction N(6)-(D-erythrulosyl)-L-lysyl-[protein] + ATP = N(6)-(3-O-phospho-D-erythrulosyl)-L-lysyl-[protein] + ADP + H(+). Its function is as follows. Ketoamine kinase that phosphorylates ketoamines, such as erythruloselysine, erythrulosecadaverine, ribuloselysine and ribulosecadaverine, on the third carbon of the sugar moiety to generate ketoamine 3-phosphate. Has higher activity on free lysine (erythruloselysine and ribuloselysine), than on ribuloselysine and erythruloselysine residues on glycated proteins. This is Probable ketoamine kinase HMPREF0351_12196 from Enterococcus faecium (strain ATCC BAA-472 / TX0016 / DO).